Consider the following 120-residue polypeptide: Large ribosomal subunit protein bL19 (120 aa).

Belongs to the bacterial ribosomal protein bL19 family.

This protein is located at the 30S-50S ribosomal subunit interface and may play a role in the structure and function of the aminoacyl-tRNA binding site. The chain is Large ribosomal subunit protein bL19 from Cyanothece sp. (strain PCC 7425 / ATCC 29141).